A 25-amino-acid chain; its full sequence is Cysteine-rich venom protein 25 (25 aa).

Positions 1 to 25 (NVDFNSESTRRKKKQKEIVDLXNSL) are disordered.

The protein belongs to the CRISP family. Contains 8 disulfide bonds. Expressed by the venom gland.

The protein resides in the secreted. The protein is Cysteine-rich venom protein 25 of Naja haje haje (Egyptian cobra).